A 155-amino-acid chain; its full sequence is Small ribosomal subunit protein uS7 (155 aa).

This sequence belongs to the universal ribosomal protein uS7 family. As to quaternary structure, part of the 30S ribosomal subunit. Contacts proteins S9 and S11.

Functionally, one of the primary rRNA binding proteins, it binds directly to 16S rRNA where it nucleates assembly of the head domain of the 30S subunit. Is located at the subunit interface close to the decoding center, probably blocks exit of the E-site tRNA. The polypeptide is Small ribosomal subunit protein uS7 (Petrotoga mobilis (strain DSM 10674 / SJ95)).